We begin with the raw amino-acid sequence, 425 residues long: 5'-deoxyadenosine deaminase (425 aa).

Zn(2+) is bound by residues H62 and H64. The substrate site is built by E91 and H183. H210 serves as a coordination point for Zn(2+). Substrate is bound by residues E213 and D298. D298 provides a ligand contact to Zn(2+).

Belongs to the metallo-dependent hydrolases superfamily. MTA/SAH deaminase family. In terms of assembly, homotetramer. The cofactor is Zn(2+).

It catalyses the reaction 5'-deoxyadenosine + H2O + H(+) = 5'-deoxyinosine + NH4(+). The catalysed reaction is S-adenosyl-L-homocysteine + H2O + H(+) = S-inosyl-L-homocysteine + NH4(+). The enzyme catalyses S-methyl-5'-thioadenosine + H2O + H(+) = S-methyl-5'-thioinosine + NH4(+). It carries out the reaction adenosine + H2O + H(+) = inosine + NH4(+). It participates in amino-acid biosynthesis; S-adenosyl-L-methionine biosynthesis. Functionally, catalyzes the deamination of three SAM-derived enzymatic products, namely 5'-deoxyadenosine, S-adenosyl-L-homocysteine, and 5'-methylthioadenosine, to produce the inosine analogs. Can also deaminate adenosine. The preferred substrate for this enzyme is 5'-deoxyadenosine, but all these substrates are efficiently deaminated. Likely functions in a S-adenosyl-L-methionine (SAM) recycling pathway from S-adenosyl-L-homocysteine (SAH) produced from SAM-dependent methylation reactions. May also be involved in the recycling of 5'-deoxyadenosine, whereupon the 5'-deoxyribose moiety of 5'-deoxyinosine is further metabolized to deoxyhexoses used for the biosynthesis of aromatic amino acids in methanogens. The polypeptide is 5'-deoxyadenosine deaminase (Methanosphaera stadtmanae (strain ATCC 43021 / DSM 3091 / JCM 11832 / MCB-3)).